The chain runs to 426 residues: 3-phosphoshikimate 1-carboxyvinyltransferase (426 aa).

3 residues coordinate 3-phosphoshikimate: lysine 20, serine 21, and arginine 25. Phosphoenolpyruvate is bound at residue lysine 20. Phosphoenolpyruvate contacts are provided by glycine 92 and arginine 120. The 3-phosphoshikimate site is built by serine 165, glutamine 167, aspartate 313, and lysine 340. Residue glutamine 167 participates in phosphoenolpyruvate binding. Catalysis depends on aspartate 313, which acts as the Proton acceptor. Arginine 344 and arginine 386 together coordinate phosphoenolpyruvate.

Belongs to the EPSP synthase family. Monomer.

The protein resides in the cytoplasm. It catalyses the reaction 3-phosphoshikimate + phosphoenolpyruvate = 5-O-(1-carboxyvinyl)-3-phosphoshikimate + phosphate. It functions in the pathway metabolic intermediate biosynthesis; chorismate biosynthesis; chorismate from D-erythrose 4-phosphate and phosphoenolpyruvate: step 6/7. In terms of biological role, catalyzes the transfer of the enolpyruvyl moiety of phosphoenolpyruvate (PEP) to the 5-hydroxyl of shikimate-3-phosphate (S3P) to produce enolpyruvyl shikimate-3-phosphate and inorganic phosphate. The sequence is that of 3-phosphoshikimate 1-carboxyvinyltransferase from Brevibacillus brevis (strain 47 / JCM 6285 / NBRC 100599).